The primary structure comprises 178 residues: Large ribosomal subunit protein uL6 (178 aa).

It belongs to the universal ribosomal protein uL6 family. In terms of assembly, part of the 50S ribosomal subunit.

In terms of biological role, this protein binds to the 23S rRNA, and is important in its secondary structure. It is located near the subunit interface in the base of the L7/L12 stalk, and near the tRNA binding site of the peptidyltransferase center. The polypeptide is Large ribosomal subunit protein uL6 (Thermobifida fusca (strain YX)).